A 733-amino-acid polypeptide reads, in one-letter code: Sulfate transporter (733 aa).

Positions 1–18 (MSLKNEEQNDLSPKDSVK) are enriched in basic and acidic residues. The segment at 1–37 (MSLKNEEQNDLSPKDSVKGNDQYRAPSGIHLEREEES) is disordered. 2 positions are modified to phosphoserine: serine 12 and serine 16. 2 helical membrane passes run 113–133 (VMSGLIVGILLVPQSIAYSLL) and 138–158 (PIYGLYTSFFASLIYFILGTS). N-linked (GlcNAc...) asparagine glycosylation occurs at asparagine 194. A run of 6 helical transmembrane segments spans residues 214–234 (IIVGSTVTFVAGVYQVAMGFF), 237–257 (GFVSVYLSDALLGGFVTGASF), 379–399 (IDAIAIAIIGFAITVSLSEMF), 415–435 (AIGFCNIIPSFFHCFTTSAAL), 453–473 (VMTALVLLLVLLVIAPLFFSL), and 519–539 (LISTEIGLLTGVCFSMFCVIL). The 152-residue stretch at 563–714 (AYKNLQAKSG…SVYEAMTFAE (152 aa)) folds into the STAS domain.

The protein belongs to the SLC26A/SulP transporter (TC 2.A.53) family. In terms of processing, N-glycosylated.

The protein resides in the cell membrane. It is found in the apical cell membrane. The catalysed reaction is oxalate(in) + sulfate(out) = oxalate(out) + sulfate(in). It carries out the reaction sulfate(out) + 2 chloride(in) = sulfate(in) + 2 chloride(out). It catalyses the reaction oxalate(out) + 2 chloride(in) = oxalate(in) + 2 chloride(out). The enzyme catalyses bromide(in) + chloride(out) = bromide(out) + chloride(in). The catalysed reaction is nitrate(in) + chloride(out) = nitrate(out) + chloride(in). It carries out the reaction iodide(in) + chloride(out) = iodide(out) + chloride(in). In terms of biological role, sulfate transporter which mediates sulfate uptake into chondrocytes in order to maintain adequate sulfation of proteoglycans which is needed for cartilage development. Mediates electroneutral anion exchange of sulfate ions for oxalate ions, sulfate and oxalate ions for chloride and/or hydroxyl ions and chloride ions for bromide, iodide and nitrate ions. The coupling of sulfate transport to both hydroxyl and chloride ions likely serves to ensure transport at both acidic pH when most sulfate uptake is mediated by sulfate-hydroxide exchange and alkaline pH when most sulfate uptake is mediated by sulfate-chloride exchange. Essential for chondrocyte proliferation, differentiation and cell size expansion. This is Sulfate transporter (SLC26A2) from Bubalus bubalis (Domestic water buffalo).